The chain runs to 337 residues: Glyceraldehyde-3-phosphate dehydrogenase 3, cytosolic (337 aa).

A binding to NAD region spans residues 1–151 (MAKIKIGING…YKSDINIVSN (151 aa)). Residues 13–14 (RI), Asp35, and Arg82 contribute to the NAD(+) site. The segment at 152 to 337 (ASCTTNCLAP…DLIRHMNSTK (186 aa)) is catalytic. D-glyceraldehyde 3-phosphate is bound by residues 153–155 (SCT), Thr184, 213–214 (TG), and Arg236. Cys154 functions as the Nucleophile in the catalytic mechanism. Asn318 is a binding site for NAD(+).

It belongs to the glyceraldehyde-3-phosphate dehydrogenase family. In terms of assembly, homotetramer.

It is found in the cytoplasm. It carries out the reaction D-glyceraldehyde 3-phosphate + phosphate + NAD(+) = (2R)-3-phospho-glyceroyl phosphate + NADH + H(+). The protein operates within carbohydrate degradation; glycolysis; pyruvate from D-glyceraldehyde 3-phosphate: step 1/5. Functionally, key enzyme in glycolysis that catalyzes the first step of the pathway by converting D-glyceraldehyde 3-phosphate (G3P) into 3-phospho-D-glyceroyl phosphate. Essential for the maintenance of cellular ATP levels and carbohydrate metabolism. This is Glyceraldehyde-3-phosphate dehydrogenase 3, cytosolic (GAPC3) from Zea mays (Maize).